Reading from the N-terminus, the 615-residue chain is MAHLSLYCLLSVSLLQLVASSGVFELKVHSFSTTRRFCRRTRDCNIFFRICLKHSEDVISAEPPCTFGTGQTSVLRADQSSIASSAAIRVPFHFKWPGTFSLIIEAWNAESPKEHHDYTENQNNLISRLATRRRLAVGEDWSQDVHFGDQSELRYSYHVFCDEFYFGEACSDYCRPRDDTLGHYTCDENGNKECLVGWQGDYCSDPICSSDCSERHGYCESPGECKCRLGWQGPSCSECVHYPGCLHGTCSQPWQCVCKEGWGGLFCNQDLNYCTNHKPCANGATCTNTGQGSYTCTCRPGFGGTNCELEINECDCNPCKNGGSCNDLENDYSCTCPQGFYGKNCEIIAMTCADDPCFNGGTCEEKFTGGYVCRCPPTFTGSNCEKRLDRCSHKPCANGGECVDLGASALCRCRPGFSGSRCETNIDDCARYPCQNAGTCQDGINDYTCTCTLGFTGKNCSLRADACLTNPCLHGGTCFTHFSGPVCQCVPGFMGSTCEFPVQASLEKMAPRVGQTSPSAVAVSCVLGVLAVFLGVCVGLVVLRRRRHRLRRQQLCDSVFNDLETVNNLDRQHYPYDRDFSQVKPCNTEGRISLAASHTLPAGQEFLWSAGGGLR.

Residues 1–20 form the signal peptide; the sequence is MAHLSLYCLLSVSLLQLVAS. The Extracellular portion of the chain corresponds to 21 to 522; the sequence is SGVFELKVHS…VGQTSPSAVA (502 aa). Positions 159–203 constitute a DSL domain; the sequence is VFCDEFYFGEACSDYCRPRDDTLGHYTCDENGNKECLVGWQGDYC. Disulfide bonds link Cys161/Cys170, Cys174/Cys186, Cys194/Cys203, Cys208/Cys219, Cys212/Cys225, Cys227/Cys236, Cys245/Cys250, Cys258/Cys267, Cys274/Cys286, Cys280/Cys296, Cys298/Cys307, Cys314/Cys325, Cys319/Cys334, Cys336/Cys345, Cys352/Cys363, Cys357/Cys373, Cys375/Cys384, Cys391/Cys402, Cys396/Cys411, Cys413/Cys422, Cys429/Cys440, Cys434/Cys449, Cys451/Cys460, Cys467/Cys478, Cys472/Cys487, and Cys489/Cys498. EGF-like domains are found at residues 204–237, 241–268, and 270–308; these read SDPICSSDCSERHGYCESPGECKCRLGWQGPSCS, HYPGCLHGTCSQPWQCVCKEGWGGLFCN, and DLNYCTNHKPCANGATCTNTGQGSYTCTCRPGFGGTNCE. An EGF-like 4; calcium-binding domain is found at 310 to 346; the sequence is EINECDCNPCKNGGSCNDLENDYSCTCPQGFYGKNCE. 2 EGF-like domains span residues 348-385 and 387-423; these read IAMTCADDPCFNGGTCEEKFTGGYVCRCPPTFTGSNCE and RLDRCSHKPCANGGECVDLGASALCRCRPGFSGSRCE. In terms of domain architecture, EGF-like 7; calcium-binding spans 425–461; sequence NIDDCARYPCQNAGTCQDGINDYTCTCTLGFTGKNCS. Residue Asn459 is glycosylated (N-linked (GlcNAc...) asparagine). The 37-residue stretch at 463-499 folds into the EGF-like 8 domain; the sequence is RADACLTNPCLHGGTCFTHFSGPVCQCVPGFMGSTCE. A helical membrane pass occupies residues 523–543; the sequence is VSCVLGVLAVFLGVCVGLVVL. Residues 544-615 are Cytoplasmic-facing; sequence RRRRHRLRRQ…FLWSAGGGLR (72 aa).

In terms of processing, ubiquitinated by mib, leading to its endocytosis and subsequent degradation.

It localises to the membrane. Its function is as follows. Acts as a ligand for Notch receptors and is involved in primary neurogenesis. Can activate Notch receptors, thereby playing a key role in lateral inhibition, a process that prevents the immediate neighbors of each nascent neural cell from simultaneously embarking on neural differentiation. This chain is Delta-like protein B (dlb), found in Danio rerio (Zebrafish).